The following is a 535-amino-acid chain: Probable lipid II flippase MurJ (535 aa).

Helical transmembrane passes span 90–110 (VLFTVLLLLTIAMELSMPFIV), 131–151 (FATIMFPYLACMSLAAMMAGM), 159–179 (FAAAIAPVFLNFILIAVLAYA), 192–212 (DLSWGVLAAGLVQLAIVWVAV), 233–253 (LLVLALPAAITGGITQINLLI), 274–294 (IYQLPLGVVGIAVATVLLPEL), 316–336 (FTLFLTLPAAAALLVMSEPIV), 350–370 (TVVVGHILAIYGLGLPAFVLI), 388–408 (IFAGISVAVNVSLALTLFPSL), 413–433 (IATAEIVAGWVNALLLFATLV), 451–471 (LVIAAAIMAAALYVAVDWLAF), and 484–504 (LTLCGLIAAAMAIYFAVAFGI).

This sequence belongs to the MurJ/MviN family.

The protein localises to the cell inner membrane. It functions in the pathway cell wall biogenesis; peptidoglycan biosynthesis. Functionally, involved in peptidoglycan biosynthesis. Transports lipid-linked peptidoglycan precursors from the inner to the outer leaflet of the cytoplasmic membrane. The sequence is that of Probable lipid II flippase MurJ from Rhizobium meliloti (strain 1021) (Ensifer meliloti).